Reading from the N-terminus, the 269-residue chain is Regulatory protein RecX (269 aa).

It belongs to the RecX family.

The protein localises to the cytoplasm. Modulates RecA activity. This is Regulatory protein RecX from Lactococcus lactis subsp. cremoris (strain SK11).